Here is a 198-residue protein sequence, read N- to C-terminus: Putative pseudouridine methyltransferase (198 aa).

Residues M132 and C186 each coordinate S-adenosyl-L-methionine.

It belongs to the methyltransferase superfamily. TrmY family.

The protein localises to the cytoplasm. The chain is Putative pseudouridine methyltransferase from Shewanella baltica (strain OS223).